The sequence spans 229 residues: Enolase-phosphatase E1 (229 aa).

It belongs to the HAD-like hydrolase superfamily. MasA/MtnC family. In terms of assembly, monomer. Requires Mg(2+) as cofactor.

It catalyses the reaction 5-methylsulfanyl-2,3-dioxopentyl phosphate + H2O = 1,2-dihydroxy-5-(methylsulfanyl)pent-1-en-3-one + phosphate. The protein operates within amino-acid biosynthesis; L-methionine biosynthesis via salvage pathway; L-methionine from S-methyl-5-thio-alpha-D-ribose 1-phosphate: step 3/6. It participates in amino-acid biosynthesis; L-methionine biosynthesis via salvage pathway; L-methionine from S-methyl-5-thio-alpha-D-ribose 1-phosphate: step 4/6. Bifunctional enzyme that catalyzes the enolization of 2,3-diketo-5-methylthiopentyl-1-phosphate (DK-MTP-1-P) into the intermediate 2-hydroxy-3-keto-5-methylthiopentenyl-1-phosphate (HK-MTPenyl-1-P), which is then dephosphorylated to form the acireductone 1,2-dihydroxy-3-keto-5-methylthiopentene (DHK-MTPene). In Citrobacter koseri (strain ATCC BAA-895 / CDC 4225-83 / SGSC4696), this protein is Enolase-phosphatase E1.